A 223-amino-acid chain; its full sequence is Alpha-S2-casein (223 aa).

The signal sequence occupies residues 1-15 (MKLFIFTCLLAVALA). Phosphoserine occurs at positions 23, 24, 25, 28, 46, 71, 72, and 73. 2 repeats span residues 76 to 128 (FADI…TLGK) and 129 to 223 (EQIS…ERQA). Phosphoserine is present on residues Ser-132, Ser-147, and Ser-155.

Belongs to the alpha-casein family. Mammary gland specific. Secreted in milk.

The protein localises to the secreted. Its function is as follows. Important role in the capacity of milk to transport calcium phosphate. The sequence is that of Alpha-S2-casein (CSN1S2) from Cavia porcellus (Guinea pig).